A 314-amino-acid chain; its full sequence is Fibrinogen-like protein 1 (314 aa).

The first 22 residues, 1 to 22, serve as a signal peptide directing secretion; that stretch reads MGEIRSFVLITVALILGKESWV. Positions 28–62 form a coiled coil; the sequence is CLQEQVRLRAQVRQLETRVKQQQVVIAQLLHEKEV. A Fibrinogen C-terminal domain is found at 76–308; that stretch reads LGGKRHYADC…SVVMKIRPSD (233 aa). Intrachain disulfides connect Cys85–Cys114 and Cys250–Cys263.

In terms of assembly, homodimer. Interacts (via the Fibrinogen C-terminal domain) with LAG3 (via Ig-like domains 1 and 2).

Its subcellular location is the secreted. Its function is as follows. Immune suppressive molecule that inhibits antigen-specific T-cell activation by acting as a major ligand of LAG3. Responsible for LAG3 T-cell inhibitory function. Binds LAG3 independently from MHC class II (MHC-II). Secreted by, and promotes growth of, hepatocytes. In Rattus norvegicus (Rat), this protein is Fibrinogen-like protein 1.